Consider the following 580-residue polypeptide: Zinc finger protein 271 (580 aa).

18 C2H2-type zinc fingers span residues 78-100 (YNCD…QRTH), 104-126 (YECE…QRIH), 132-154 (YPCS…QRVH), 160-182 (YKCD…QRIH), 188-210 (YQCS…LRIH), 216-238 (YMCN…QRIH), 244-266 (YKCD…QRIH), 272-294 (YPCA…RRIH), 300-322 (YKCS…QRIH), 328-350 (YPCN…QRIH), 356-378 (YPCS…YRIH), 384-406 (YECD…QRIH), 412-434 (YPCN…QRVH), 440-462 (YTCN…QRVH), 468-490 (YHCS…HRVH), 496-518 (YACT…QRIH), 524-545 (YKCM…QRIH), and 551-573 (YPCA…QRVH).

It belongs to the krueppel C2H2-type zinc-finger protein family. In terms of tissue distribution, selectively expressed in adult testis.

It localises to the nucleus. Functionally, may act to control gene activity during the pachytene stage of meiotic prophase. May function as a transcription activator. This chain is Zinc finger protein 271 (Znf271), found in Mus musculus (Mouse).